The sequence spans 113 residues: Large ribosomal subunit protein uL22 (113 aa).

This sequence belongs to the universal ribosomal protein uL22 family. In terms of assembly, part of the 50S ribosomal subunit.

Its function is as follows. This protein binds specifically to 23S rRNA; its binding is stimulated by other ribosomal proteins, e.g. L4, L17, and L20. It is important during the early stages of 50S assembly. It makes multiple contacts with different domains of the 23S rRNA in the assembled 50S subunit and ribosome. Functionally, the globular domain of the protein is located near the polypeptide exit tunnel on the outside of the subunit, while an extended beta-hairpin is found that lines the wall of the exit tunnel in the center of the 70S ribosome. This chain is Large ribosomal subunit protein uL22, found in Pelotomaculum thermopropionicum (strain DSM 13744 / JCM 10971 / SI).